A 497-amino-acid polypeptide reads, in one-letter code: Endoglucanase 17 (497 aa).

The first 21 residues, 1–21 (MAAAGGAVLLLVLATATSVTG), serve as a signal peptide directing secretion. D77 (nucleophile) is an active-site residue. Residue H406 is part of the active site. Residue N451 is glycosylated (N-linked (GlcNAc...) asparagine). Residues D458 and E467 contribute to the active site.

Belongs to the glycosyl hydrolase 9 (cellulase E) family.

It localises to the secreted. The catalysed reaction is Endohydrolysis of (1-&gt;4)-beta-D-glucosidic linkages in cellulose, lichenin and cereal beta-D-glucans.. In Oryza sativa subsp. japonica (Rice), this protein is Endoglucanase 17 (GLU13).